Here is a 493-residue protein sequence, read N- to C-terminus: MIVNSLSLCYHNKLILAPMVRVGTLPMRLLALDYGADIVYCEELIDLKMLQCKRVVNEVLSTVDFVAPDDRVVFRTCEREQSRVVFQMGTSDAERALAVARLVENDVAGIDVNMGCPKEYSTKGGMGAALLSDPDKIEKILSTLVKGTHRPVTCKIRILPSLEDTLNLVKRIERTGISAIAVHGRNRDERPQHPVSCEVIRAIAETLSIPVIANGGSHDHIQQHVDIEDFRQATAASSVMVARAAMWNPSIFLKDGLRPLEEVMQKYIRYAVQYDNHYTNTKYCLCQMLREQLESPQGRLLHAAQSSQEICEAFGLGAFYEETIRELDARRADLLAKTPEAVEEPAEDTSGIIKMAIRFDRRAYPPQITPKMCLLEWCRREKLPQPVYETVQRTIDRMFCSVVTVAEQKYQSTLWDKSKKLAEQTAAIVCLRSQGLPEGRLGEESPSLNKRKREAPDQDPGGPRVQEPALPGEICKKPFVTLDSSEENLLEGC.

Residues 1 to 333 form a catalytic domain region; the sequence is MIVNSLSLCY…IRELDARRAD (333 aa). FMN contacts are provided by residues 18–20, glutamate 43, and glutamine 87; that span reads PMV. Cysteine 116 (proton donor) is an active-site residue. FMN-binding positions include lysine 155, histidine 183, 214–216, and 242–243; these read NGG and AR. 2 interaction with tRNA regions span residues 367–371 and 420–424; these read QITPK and KLAEQ. The DRBM domain maps to 369 to 436; sequence TPKMCLLEWC…AIVCLRSQGL (68 aa). The disordered stretch occupies residues 438–472; it reads EGRLGEESPSLNKRKREAPDQDPGGPRVQEPALPG. Serine 445 is modified (phosphoserine).

This sequence belongs to the Dus family. Dus2 subfamily. As to quaternary structure, interacts with EPRS1. Interacts (via DRBM domain) with PRKRA and EIF2AK2/PKR (via DRBM 1 domain). It depends on FMN as a cofactor.

The protein localises to the cytoplasm. It is found in the endoplasmic reticulum. It carries out the reaction 5,6-dihydrouridine(20) in tRNA + NADP(+) = uridine(20) in tRNA + NADPH + H(+). Its function is as follows. Catalyzes the NADPH-dependent synthesis of dihydrouridine, a modified base found in the D-loop of most tRNAs. Specifically modifies U20 in cytoplasmic tRNAs. Activity depends on the presence of guanosine at position 19 in the tRNA substrate. Negatively regulates the activation of EIF2AK2/PKR. In Mus musculus (Mouse), this protein is tRNA-dihydrouridine(20) synthase [NAD(P)+]-like (Dus2).